Consider the following 334-residue polypeptide: snRNA-activating protein complex subunit 2 (334 aa).

Disordered stretches follow at residues 137–200 and 271–306; these read LHSK…STEE and AGGS…ELKS. Residues 167–180 are compositionally biased toward low complexity; sequence IPSSAPAAPSSAPR.

In terms of assembly, part of the SNAPc complex composed of 5 subunits: SNAPC1, SNAPC2, SNAPC3, SNAPC4 and SNAPC5. SNAPC2 interacts with TBP and SNAPC4.

Its subcellular location is the nucleus. In terms of biological role, part of the SNAPc complex required for the transcription of both RNA polymerase II and III small-nuclear RNA genes. Binds to the proximal sequence element (PSE), a non-TATA-box basal promoter element common to these 2 types of genes. Recruits TBP and BRF2 to the U6 snRNA TATA box. The chain is snRNA-activating protein complex subunit 2 (SNAPC2) from Homo sapiens (Human).